Here is a 228-residue protein sequence, read N- to C-terminus: MTVQIITIDGPSGSGKGTLAAKLAAYYQFHLLDSGALYRLLGLSLHKHDLLEKLDSHLDECVNYARQLNIKFETSAEGTLVFLDGEDVTQTIRTERVGEYASKVAAIPELRQALFERQRAFAQTPGLVADGRDMATSIFPEANAKIYLTASAESRAERRVKQLQGMGLDAKINDILANIQARDKRDMEREVAPLKPAGDAYIIDSSELTIDQVFKLMVDYVNSRTVSN.

An ATP-binding site is contributed by 10–18 (GPSGSGKGT).

Belongs to the cytidylate kinase family. Type 1 subfamily.

The protein resides in the cytoplasm. The enzyme catalyses CMP + ATP = CDP + ADP. It carries out the reaction dCMP + ATP = dCDP + ADP. The chain is Cytidylate kinase from Acinetobacter baumannii (strain SDF).